The sequence spans 376 residues: Putative transmembrane protein 183BP (376 aa).

Disordered stretches follow at residues Met1–Lys20 and Ala102–Gly127. The chain crosses the membrane as a helical span at residues Leu300–Val320.

This sequence belongs to the TMEM183 family. Expressed in brain, lung, pancreas, thymus, intestine and blood. Not detected in heart, placenta, liver, muscle, kidney, spleen, prostate, testis, ovary and colon.

The protein resides in the membrane. This is Putative transmembrane protein 183BP from Homo sapiens (Human).